The following is a 293-amino-acid chain: Alcohol dehydrogenase 1 (293 aa).

Cys-26, Cys-29, Cys-32, Cys-40, and Cys-104 together coordinate Zn(2+). Residues 129-134 (GLGAVG), Asp-153, Arg-158, Thr-199, Val-222, 222-224 (VGV), and Phe-249 contribute to the NAD(+) site.

This sequence belongs to the zinc-containing alcohol dehydrogenase family. Homodimer. Zn(2+) is required as a cofactor.

It is found in the cytoplasm. It catalyses the reaction a primary alcohol + NAD(+) = an aldehyde + NADH + H(+). The catalysed reaction is a secondary alcohol + NAD(+) = a ketone + NADH + H(+). The chain is Alcohol dehydrogenase 1 (ADH1) from Zea luxurians (Guatemalan teosinte).